Here is a 349-residue protein sequence, read N- to C-terminus: Crinkler effector protein 5 (349 aa).

The N-terminal stretch at 1 to 17 (MVKLFCSIVGVAGSPFS) is a signal peptide. The segment at 18 to 57 (VEVNEGKTVDDLKKAIKAENLDDPTLRNVAPKNLQLFLAK) is LQLFLAK domain. The segment at 58–108 (KGDAWLRYNEDLDTYLQSEIDTSSYLHMRASWKLSKPTLFGPDVSLGEDVV) is DWL domain. The HVLVXXP motif signature appears at 109–115 (HVLVVVP).

It belongs to the Crinkler effector family.

The protein localises to the secreted. It localises to the host nucleus. In terms of biological role, secreted effector that elicits necrosis in host plants, a characteristic of plant innate immunity. This is Crinkler effector protein 5 from Phytophthora infestans (Potato late blight agent).